Reading from the N-terminus, the 182-residue chain is Bifunctional protein PyrR (182 aa).

The PRPP-binding signature appears at 99–111 (VILVDDVLYTGRT).

This sequence belongs to the purine/pyrimidine phosphoribosyltransferase family. PyrR subfamily. Homodimer and homohexamer; in equilibrium.

It catalyses the reaction UMP + diphosphate = 5-phospho-alpha-D-ribose 1-diphosphate + uracil. In terms of biological role, regulates transcriptional attenuation of the pyrimidine nucleotide (pyr) operon by binding in a uridine-dependent manner to specific sites on pyr mRNA. This disrupts an antiterminator hairpin in the RNA and favors formation of a downstream transcription terminator, leading to a reduced expression of downstream genes. Functionally, also displays a weak uracil phosphoribosyltransferase activity which is not physiologically significant. The chain is Bifunctional protein PyrR from Alkaliphilus metalliredigens (strain QYMF).